We begin with the raw amino-acid sequence, 100 residues long: Large ribosomal subunit protein uL23 (100 aa).

The protein belongs to the universal ribosomal protein uL23 family. As to quaternary structure, part of the 50S ribosomal subunit. Contacts protein L29, and trigger factor when it is bound to the ribosome.

Functionally, one of the early assembly proteins it binds 23S rRNA. One of the proteins that surrounds the polypeptide exit tunnel on the outside of the ribosome. Forms the main docking site for trigger factor binding to the ribosome. This chain is Large ribosomal subunit protein uL23, found in Bradyrhizobium diazoefficiens (strain JCM 10833 / BCRC 13528 / IAM 13628 / NBRC 14792 / USDA 110).